The primary structure comprises 269 residues: Shikimate dehydrogenase (NADP(+)) (269 aa).

Shikimate-binding positions include 17-19 and T64; that span reads SKS. K68 serves as the catalytic Proton acceptor. Residue E80 participates in NADP(+) binding. The shikimate site is built by N89 and D105. Residues 130-134, 154-159, and M213 contribute to the NADP(+) site; these read GAGGA and NRTRAK. Y215 contributes to the shikimate binding site. G237 serves as a coordination point for NADP(+).

This sequence belongs to the shikimate dehydrogenase family. In terms of assembly, homodimer.

The enzyme catalyses shikimate + NADP(+) = 3-dehydroshikimate + NADPH + H(+). Its pathway is metabolic intermediate biosynthesis; chorismate biosynthesis; chorismate from D-erythrose 4-phosphate and phosphoenolpyruvate: step 4/7. In terms of biological role, involved in the biosynthesis of the chorismate, which leads to the biosynthesis of aromatic amino acids. Catalyzes the reversible NADPH linked reduction of 3-dehydroshikimate (DHSA) to yield shikimate (SA). The polypeptide is Shikimate dehydrogenase (NADP(+)) (Neisseria lactamica).